We begin with the raw amino-acid sequence, 52 residues long: Large ribosomal subunit protein eL40 (52 aa).

4 residues coordinate Zn(2+): C20, C23, C34, and C39.

The protein belongs to the eukaryotic ribosomal protein eL40 family. Component of the large ribosomal subunit. Mature ribosomes consist of a small (40S) and a large (60S) subunit. The 40S subunit contains about 32 different proteins and 1 molecule of RNA (18S). The 60S subunit contains 45 different proteins and 3 molecules of RNA (25S, 5.8S and 5S). Requires Zn(2+) as cofactor.

It is found in the cytoplasm. Functionally, component of the ribosome, a large ribonucleoprotein complex responsible for the synthesis of proteins in the cell. The small ribosomal subunit (SSU) binds messenger RNAs (mRNAs) and translates the encoded message by selecting cognate aminoacyl-transfer RNA (tRNA) molecules. The large subunit (LSU) contains the ribosomal catalytic site termed the peptidyl transferase center (PTC), which catalyzes the formation of peptide bonds, thereby polymerizing the amino acids delivered by tRNAs into a polypeptide chain. The nascent polypeptides leave the ribosome through a tunnel in the LSU and interact with protein factors that function in enzymatic processing, targeting, and the membrane insertion of nascent chains at the exit of the ribosomal tunnel. This is Large ribosomal subunit protein eL40 from Candida albicans (strain SC5314 / ATCC MYA-2876) (Yeast).